The following is a 748-amino-acid chain: MDAPVPAAPAFGGSWAKLNPPLSPWILDVINSMGFKNMTPVQAGTIPRAVKNQDCVVEAVTGSGKTLAFTIPVLERLSRREEPYKKGEIAAIVVAPTRELATQIHAVFHHFLSSLIPPESEEETGDVEAHAPPFASSSRSPSPQTPDKPLFPLPMLVTSGTPTPYETFQSTHPSILIGTPGRLAAFLLNPRGLAIVRVSELDVLVLDEADRLLSSPDHRRDVERIMRHLPKQRRTHLFSATMTDAVEEMIGLGLRNPVRIVVNLKDKRKDGEEPKERRTPMALQNTYLVCRHAEKTLQLIRLLLCESTKHERSKFIVYFSTCAAVDYFYRILSRLPSLSKFHLTSFHGELPPKIRETALSTFTSHPSSHLSPAVLLCTDVAARGVDFLDIDVVIQYDAPTDPKTFSHRAGRTARAGRRGKAVVLLGKGREEDYVGTFQSANAELMKRKRQKAQRSILDFLNIRKIPLTKQPYINAYLEEVDTPQALDPEATTLLHSIRQIILTDRELSDKAAKSFVSAFRAYSKHEASFIFRTLDFDFNSQAISFGLLRLPAMPEIKDWKKKKEAERQRLEKIKSEGGEVEEKEIIEWEDAGVNWDTFAYASRQREAARLATLAQRADNQSSNDAARAEARAKRKIKAEMREAWSEQKERKVRKEERKEKKDAKKKYEWELEQANGEGDRQSDLANIAKAQAERKKRREREEESWDEEIGKEYKSLKREIKEEKSVKESSKGGAGGGGIGGGMFDDLE.

The Q motif motif lies at 15–43 (WAKLNPPLSPWILDVINSMGFKNMTPVQA). The Helicase ATP-binding domain maps to 46 to 260 (IPRAVKNQDC…GLGLRNPVRI (215 aa)). 59 to 66 (AVTGSGKT) contacts ATP. The segment at 119 to 156 (ESEEETGDVEAHAPPFASSSRSPSPQTPDKPLFPLPML) is disordered. Over residues 132–142 (PPFASSSRSPS) the composition is skewed to low complexity. Residues 143 to 152 (PQTPDKPLFP) show a composition bias toward pro residues. Positions 207 to 210 (DEAD) match the DEAD box motif. Residues 295-460 (KTLQLIRLLL…KAQRSILDFL (166 aa)) enclose the Helicase C-terminal domain. The tract at residues 614–748 (AQRADNQSSN…IGGGMFDDLE (135 aa)) is disordered. 2 stretches are compositionally biased toward basic and acidic residues: residues 626-669 (ARAE…KYEW) and 708-730 (EIGK…KESS). The span at 732 to 748 (GGAGGGGIGGGMFDDLE) shows a compositional bias: gly residues.

It belongs to the DEAD box helicase family. DDX55/SPB4 subfamily. In terms of assembly, component of pre-60S ribosomal complexes.

It is found in the nucleus. The protein resides in the nucleolus. It catalyses the reaction ATP + H2O = ADP + phosphate + H(+). Its function is as follows. ATP-binding RNA helicase involved in the biogenesis of 60S ribosomal subunits. Binds 90S pre-ribosomal particles and dissociates from pre-60S ribosomal particles after processing of 27SB pre-rRNA. Required for the normal formation of 18S rRNA through the processing of pre-rRNAs at sites A0, A1 and A2, and the normal formation of 25S and 5.8S rRNAs through the processing of pre-rRNAs at sites C1 and C2. This chain is ATP-dependent rRNA helicase SPB4, found in Cryptococcus neoformans var. neoformans serotype D (strain B-3501A) (Filobasidiella neoformans).